Consider the following 130-residue polypeptide: Small ribosomal subunit protein uS11 (130 aa).

The protein belongs to the universal ribosomal protein uS11 family. In terms of assembly, part of the 30S ribosomal subunit. Interacts with proteins S7 and S18. Binds to IF-3.

Located on the platform of the 30S subunit, it bridges several disparate RNA helices of the 16S rRNA. Forms part of the Shine-Dalgarno cleft in the 70S ribosome. This chain is Small ribosomal subunit protein uS11, found in Latilactobacillus sakei subsp. sakei (strain 23K) (Lactobacillus sakei subsp. sakei).